The primary structure comprises 474 residues: tRNA-2-methylthio-N(6)-dimethylallyladenosine synthase (474 aa).

In terms of domain architecture, MTTase N-terminal spans 3–120; sequence KKLLIKTWGC…LPQMIKDSQS (118 aa). Residues Cys12, Cys49, Cys83, Cys157, Cys161, and Cys164 each coordinate [4Fe-4S] cluster. The Radical SAM core domain occupies 143–375; that stretch reads RADGVTAFVS…QQQINTQAMR (233 aa). Residues 378-441 enclose the TRAM domain; that stretch reads RQMLNTEQRI…TNSLRGELVR (64 aa).

This sequence belongs to the methylthiotransferase family. MiaB subfamily. Monomer. [4Fe-4S] cluster is required as a cofactor.

It localises to the cytoplasm. The catalysed reaction is N(6)-dimethylallyladenosine(37) in tRNA + (sulfur carrier)-SH + AH2 + 2 S-adenosyl-L-methionine = 2-methylsulfanyl-N(6)-dimethylallyladenosine(37) in tRNA + (sulfur carrier)-H + 5'-deoxyadenosine + L-methionine + A + S-adenosyl-L-homocysteine + 2 H(+). In terms of biological role, catalyzes the methylthiolation of N6-(dimethylallyl)adenosine (i(6)A), leading to the formation of 2-methylthio-N6-(dimethylallyl)adenosine (ms(2)i(6)A) at position 37 in tRNAs that read codons beginning with uridine. The polypeptide is tRNA-2-methylthio-N(6)-dimethylallyladenosine synthase (Photobacterium profundum (strain SS9)).